The following is a 261-amino-acid chain: Cytochrome c oxidase subunit 3 (261 aa).

The Mitochondrial matrix portion of the chain corresponds to 1–15 (MAHQAHAYHMVDPSP). The chain crosses the membrane as a helical span at residues 16–34 (WPLTGAIAALLMTSGLAIW). Over 35–40 (FHFHST) the chain is Mitochondrial intermembrane. Residues 41–66 (TLMTLGLILLLLTMYQWWRDIIREGT) traverse the membrane as a helical segment. The Mitochondrial matrix portion of the chain corresponds to 67 to 72 (FQGHHT). The helical transmembrane segment at 73–105 (PPVQKGLRYGMILFITSEVFFFLGFFWAFYHSS) threads the bilayer. Residues 106–128 (LAPTPELGGCWPPTGITPLDPFE) lie on the Mitochondrial intermembrane side of the membrane. A helical membrane pass occupies residues 129–152 (VPLLNTAVLLASGVTVTWAHHSIM). The Mitochondrial matrix segment spans residues 153–155 (EGE). A helical membrane pass occupies residues 156 to 183 (RKQAIQSLALTILLGFYFTALQAMEYYE). Residues 184-190 (APFTIAD) lie on the Mitochondrial intermembrane side of the membrane. The helical transmembrane segment at 191–223 (GVYGSTFFVATGFHGLHVIIGSTFLAVCLLRQI) threads the bilayer. Over 224–232 (QYHFTSEHH) the chain is Mitochondrial matrix. Residues 233–256 (FGFEAAAWYWHFVDVVWLFLYVSI) form a helical membrane-spanning segment. At 257–261 (YWWGS) the chain is on the mitochondrial intermembrane side.

The protein belongs to the cytochrome c oxidase subunit 3 family. As to quaternary structure, component of the cytochrome c oxidase (complex IV, CIV), a multisubunit enzyme composed of 14 subunits. The complex is composed of a catalytic core of 3 subunits MT-CO1, MT-CO2 and MT-CO3, encoded in the mitochondrial DNA, and 11 supernumerary subunits COX4I, COX5A, COX5B, COX6A, COX6B, COX6C, COX7A, COX7B, COX7C, COX8 and NDUFA4, which are encoded in the nuclear genome. The complex exists as a monomer or a dimer and forms supercomplexes (SCs) in the inner mitochondrial membrane with NADH-ubiquinone oxidoreductase (complex I, CI) and ubiquinol-cytochrome c oxidoreductase (cytochrome b-c1 complex, complex III, CIII), resulting in different assemblies (supercomplex SCI(1)III(2)IV(1) and megacomplex MCI(2)III(2)IV(2)).

Its subcellular location is the mitochondrion inner membrane. The catalysed reaction is 4 Fe(II)-[cytochrome c] + O2 + 8 H(+)(in) = 4 Fe(III)-[cytochrome c] + 2 H2O + 4 H(+)(out). Component of the cytochrome c oxidase, the last enzyme in the mitochondrial electron transport chain which drives oxidative phosphorylation. The respiratory chain contains 3 multisubunit complexes succinate dehydrogenase (complex II, CII), ubiquinol-cytochrome c oxidoreductase (cytochrome b-c1 complex, complex III, CIII) and cytochrome c oxidase (complex IV, CIV), that cooperate to transfer electrons derived from NADH and succinate to molecular oxygen, creating an electrochemical gradient over the inner membrane that drives transmembrane transport and the ATP synthase. Cytochrome c oxidase is the component of the respiratory chain that catalyzes the reduction of oxygen to water. Electrons originating from reduced cytochrome c in the intermembrane space (IMS) are transferred via the dinuclear copper A center (CU(A)) of subunit 2 and heme A of subunit 1 to the active site in subunit 1, a binuclear center (BNC) formed by heme A3 and copper B (CU(B)). The BNC reduces molecular oxygen to 2 water molecules using 4 electrons from cytochrome c in the IMS and 4 protons from the mitochondrial matrix. The polypeptide is Cytochrome c oxidase subunit 3 (mt-co3) (Carassius auratus (Goldfish)).